The following is a 24-amino-acid chain: Skin secreted peptide 1 (24 aa).

Expressed by the skin glands.

It localises to the secreted. This is Skin secreted peptide 1 from Ascaphus truei (Coastal tailed frog).